The following is a 208-amino-acid chain: Non-specific lipid transfer protein GPI-anchored 4 (208 aa).

Residues 1–25 form the signal peptide; it reads MKQSLLLSFVLLLLSSSSLVTPIHA. N-linked (GlcNAc...) asparagine glycosylation is found at Asn-27, Asn-67, and Asn-105. 4 cysteine pairs are disulfide-bonded: Cys-48/Cys-91, Cys-58/Cys-75, Cys-76/Cys-116, and Cys-89/Cys-125. The interval 136–181 is disordered; that stretch reads GASPVSPSAGAPTTSPSAAKSPETSATSPSSDETPSMTAPSPSSSG. A lipid anchor (GPI-anchor amidated serine) is attached at Ser-179. A propeptide spans 180–208 (removed in mature form); it reads SGTNILSVPALTIVFVIVSSVAYISAFSN.

This sequence belongs to the plant LTP family. Confined to the anthers and stamen of the inflorescence, especially in pollen.

The protein localises to the cell membrane. Lipid transfer protein involved in seed and ovule maturation and development, probably by regulating the fatty acids homeostasis during suberin and sporopollenin biosynthesis or deposition. The protein is Non-specific lipid transfer protein GPI-anchored 4 of Arabidopsis thaliana (Mouse-ear cress).